The chain runs to 255 residues: F-box/SPRY domain-containing protein 1 (255 aa).

The F-box domain occupies 3–51 (DPVAALCNFNVLEVIFSYLDLNDLSRCSQVCRSWHHFLNDENSDVWRWH). Residues 61-253 (MKSDLLTSVS…VSMVYLGTPL (193 aa)) enclose the B30.2/SPRY domain.

Belongs to the FBXO45/Fsn family. In terms of assembly, component of an E3 ubiquitin ligase complex composed of hiw and Fsn.

It is found in the synapse. It functions in the pathway protein modification; protein ubiquitination. Required in the presynaptic motoneuron to down-regulate the levels of wnd and restrain synaptic terminal growth at the neuromuscular junction (NMJ). In Drosophila willistoni (Fruit fly), this protein is F-box/SPRY domain-containing protein 1.